A 197-amino-acid chain; its full sequence is uncharacterized protein (197 aa).

4 helical membrane-spanning segments follow: residues 30-50 (WVAM…VEMA), 61-81 (LVAG…PPLV), 101-121 (LWSV…LGLA), and 130-150 (IGEF…VAML).

The protein localises to the cell membrane. This is an uncharacterized protein from Mycobacterium tuberculosis (strain CDC 1551 / Oshkosh).